The sequence spans 336 residues: Glyoxylate reductase (336 aa).

Residues 158 to 161 (FGRI), 180 to 182 (SRT), and 239 to 241 (IAR) each bind NADP(+). Catalysis depends on residues arginine 241 and glutamate 270. Histidine 288 serves as the catalytic Proton donor. Position 288-290 (288-290 (HIG)) interacts with NADP(+).

Belongs to the D-isomer specific 2-hydroxyacid dehydrogenase family. GyaR subfamily. In terms of assembly, homodimer.

It is found in the cytoplasm. The enzyme catalyses glycolate + NAD(+) = glyoxylate + NADH + H(+). In Pyrococcus furiosus (strain ATCC 43587 / DSM 3638 / JCM 8422 / Vc1), this protein is Glyoxylate reductase.